A 197-amino-acid chain; its full sequence is uncharacterized protein (197 aa).

One can recognise a PfpI endopeptidase domain in the interval 29–166 (DWSVHTVSLD…FTNLILEMID (138 aa)). The active-site Nucleophile is C98.

This sequence belongs to the peptidase C56 family.

This is an uncharacterized protein from Bacillus subtilis (strain 168).